The chain runs to 86 residues: Small ribosomal subunit protein bS16 (86 aa).

The protein belongs to the bacterial ribosomal protein bS16 family.

This Methylacidiphilum infernorum (isolate V4) (Methylokorus infernorum (strain V4)) protein is Small ribosomal subunit protein bS16.